Consider the following 209-residue polypeptide: Pyridoxine/pyridoxamine 5'-phosphate oxidase (209 aa).

Residues 7 to 10 and K64 each bind substrate; that span reads REDY. FMN-binding positions include 59 to 64, 74 to 75, R80, and K81; these read RIVLLK and FT. Substrate-binding residues include Y121, R125, and S129. Residues 138–139 and W182 each bind FMN; that span reads QS. 188–190 contacts substrate; the sequence is RLH. R192 provides a ligand contact to FMN.

The protein belongs to the pyridoxamine 5'-phosphate oxidase family. In terms of assembly, homodimer. FMN is required as a cofactor.

It catalyses the reaction pyridoxamine 5'-phosphate + O2 + H2O = pyridoxal 5'-phosphate + H2O2 + NH4(+). The catalysed reaction is pyridoxine 5'-phosphate + O2 = pyridoxal 5'-phosphate + H2O2. It functions in the pathway cofactor metabolism; pyridoxal 5'-phosphate salvage; pyridoxal 5'-phosphate from pyridoxamine 5'-phosphate: step 1/1. Its pathway is cofactor metabolism; pyridoxal 5'-phosphate salvage; pyridoxal 5'-phosphate from pyridoxine 5'-phosphate: step 1/1. Its function is as follows. Catalyzes the oxidation of either pyridoxine 5'-phosphate (PNP) or pyridoxamine 5'-phosphate (PMP) into pyridoxal 5'-phosphate (PLP). This Actinobacillus pleuropneumoniae serotype 5b (strain L20) protein is Pyridoxine/pyridoxamine 5'-phosphate oxidase.